A 1348-amino-acid polypeptide reads, in one-letter code: MAQHGDGKQYMELDQSKGTEMRNKALMDNNMLLETFIQMSEKGRLSSNYMTVTAIVRDVEQESFAFASECGILDVSQKMLKNFKSLCAILRSIRPDASSNNAFAYWKEVICKWLCATLLSTRPDAGSDDGFAYWKEVIWKTKQEFRAKYPFPETPFAANKVDDVNTHSPKFVMEFIDAVVGNLNVLVKINDPSSLLFVPGPNEQTEQVLKELKLLRFFVCFVSNKCIEPQYRRTTFYTHALIEASHITMVVWLHFPIYGNGNQDLNPGDVSRLLSDFMEMKIKSIQLGISRNNIYIDVLKALKSTIPQAQNKHAAESGIEETPTHNLMVGLSDQMANLREMICLLRDNLIHLPILDLEFHVQDMDSVIVDAGLLFYSLYDIKGEKEDKTLEDINQALGFDIPRNIEPIKAMVYLVMQKAFQSNLPRIHGLGYVDFLLKNLKDFQGRYSDSLAFLKNQLQVIQTEFESLQPFLKVVVEEPHNRLKTLNEDCATQIIRKAYEVEYVVDACINKEVPQWCIERWLLDIIEEITCIKANIQEKNTVEDTMKTVIGRTSSQLTRTPRMNEEIVGFEDVIENLRKKLLNGTKGQDVISIHGMPGLGKTTLANRLYSDRSVVSQFDICAQCCVSQVYSYKELLLALLCDAVGEDSARRELPDNELADMFRKTLLPRRYLILVDDVWENSAWDDLRGCFPDVNNRSRIILTTRHHEVAKYASVHSDPLHLRMFGEDESWKLLEKKVFGEERCSPLLKNVGLRIAKMCGRLPLSIVLVAGILSEMEKEVECWEQVANNLGSHIHNDSRAIVDQSYHVLPFHLKSCFLYFGAFLEDRVINVSRLIRLWISESFIKSCEGRRLEDIAEGYLENLIGRNLVMVTQRANSDGKVKACRLHDVLLDFCKERAAEENFLLRIKWDQSTKPSSCVYSHKQHAHLAFTGMDNLLEWSTSGSLVGSVLFKNYDPNFAYNSCSSHAFAISRILPNFKFLKVLDLEHQFFIDFIPTELLYLRYLSARIGQNSIPSSISNLWNLETLILKDVRYMRRCRLLQPNTVWDMVKLRHLHIPYFSTEKEEALLENSAKLYDLETLSTPYFFRVENAELMLRKTPNLRKLICAIECLEYPPQYHVLNFPITLEILKLYRSSDFKVIPFCISAQNLKYLKLSGFYLNSQYLSETADHLKHLEVLKLHNIEFGGHSEWEVSNAKFPQLKILKLEYVSLMKLIVADDAFPNLEQLVLHDCEDLMEIPSCFMDILSLKYIEVDNCSESVVKSARNIQETQVEDSQNNNFKLVIVKKMVLKFDTSNEKEISKAFDRLLSLPGIQSIAVDSNEKKFIVIGDMDADEVRLVVGKLINRGML.

Coiled-coil stretches lie at residues Arg446–Gln469 and Pro561–Asn583. The NB-ARC domain occupies Arg552–Glu848. Gly595–Thr602 is an ATP binding site. 8 LRR repeats span residues Phe977–Leu1001, Leu1051–Leu1074, Pro1123–Gln1147, Tyr1151–His1170, Leu1171–Asn1194, Phe1197–Ala1219, Phe1220–Ile1244, and Leu1309–Ala1332. One can recognise an HMA domain in the interval Val1284 to Leu1348.

The protein belongs to the disease resistance NB-LRR family.

Its subcellular location is the cytoplasm. It localises to the membrane. Functionally, confers resistance to late blight (Phytophthora infestans) races carrying the avirulence gene Avr1. Resistance proteins guard the plant against pathogens that contain an appropriate avirulence protein via an indirect interaction with this avirulence protein. That triggers a defense system including the hypersensitive response, which restricts the pathogen growth. This chain is Putative late blight resistance protein homolog R1B-12 (R1B-12), found in Solanum demissum (Wild potato).